A 44-amino-acid chain; its full sequence is Cytochrome b559 subunit beta (44 aa).

The helical transmembrane segment at 19-35 (WLSVHALGVPSVFFLGA) threads the bilayer. Residue His23 coordinates heme.

It belongs to the PsbE/PsbF family. In terms of assembly, heterodimer of an alpha subunit and a beta subunit. PSII is composed of 1 copy each of membrane proteins PsbA, PsbB, PsbC, PsbD, PsbE, PsbF, PsbH, PsbI, PsbJ, PsbK, PsbL, PsbM, PsbT, PsbX, PsbY, PsbZ, Psb30/Ycf12, peripheral proteins PsbO, CyanoQ (PsbQ), PsbU, PsbV and a large number of cofactors. It forms dimeric complexes. Heme b serves as cofactor.

It localises to the cellular thylakoid membrane. In terms of biological role, this b-type cytochrome is tightly associated with the reaction center of photosystem II (PSII). PSII is a light-driven water:plastoquinone oxidoreductase that uses light energy to abstract electrons from H(2)O, generating O(2) and a proton gradient subsequently used for ATP formation. It consists of a core antenna complex that captures photons, and an electron transfer chain that converts photonic excitation into a charge separation. The sequence is that of Cytochrome b559 subunit beta from Synechococcus elongatus (strain ATCC 33912 / PCC 7942 / FACHB-805) (Anacystis nidulans R2).